The chain runs to 344 residues: Autoinducer 2 import system permease protein LsrC (344 aa).

The next 9 helical transmembrane spans lie at 13 to 33, 38 to 58, 69 to 89, 90 to 110, 114 to 134, 155 to 175, 212 to 232, 251 to 271, and 283 to 303; these read FFAI…YFIL, MIFA…LVML, TVGL…GLAT, AIAF…LLVV, IPAI…MLLW, FIGV…GGWL, LNGM…GFVP, GISL…AFFL, and LPAW…LVLD. The disordered stretch occupies residues 323-344; the sequence is QPGNKGSKQVARFPERKSKEVA. Basic and acidic residues predominate over residues 335 to 344; that stretch reads FPERKSKEVA.

This sequence belongs to the binding-protein-dependent transport system permease family. AraH/RbsC subfamily. In terms of assembly, the complex is composed of two ATP-binding proteins (LsrA), two transmembrane proteins (LsrC and LsrD) and a solute-binding protein (LsrB).

It is found in the cell inner membrane. Its function is as follows. Part of the ABC transporter complex LsrABCD involved in autoinducer 2 (AI-2) import. Probably responsible for the translocation of the substrate across the membrane. This is Autoinducer 2 import system permease protein LsrC (lsrC) from Klebsiella pneumoniae subsp. pneumoniae (strain ATCC 700721 / MGH 78578).